The primary structure comprises 274 residues: NADPH-dependent 7-cyano-7-deazaguanine reductase (274 aa).

Substrate is bound at residue 80 to 82; it reads VES. An NADPH-binding site is contributed by 82 to 83; that stretch reads SK. The active-site Thioimide intermediate is C181. The Proton donor role is filled by D188. 220–221 provides a ligand contact to substrate; that stretch reads HE. 249 to 250 contacts NADPH; the sequence is RG.

This sequence belongs to the GTP cyclohydrolase I family. QueF type 2 subfamily. As to quaternary structure, homodimer.

The protein resides in the cytoplasm. The catalysed reaction is 7-aminomethyl-7-carbaguanine + 2 NADP(+) = 7-cyano-7-deazaguanine + 2 NADPH + 3 H(+). The protein operates within tRNA modification; tRNA-queuosine biosynthesis. Functionally, catalyzes the NADPH-dependent reduction of 7-cyano-7-deazaguanine (preQ0) to 7-aminomethyl-7-deazaguanine (preQ1). The chain is NADPH-dependent 7-cyano-7-deazaguanine reductase from Burkholderia vietnamiensis (strain G4 / LMG 22486) (Burkholderia cepacia (strain R1808)).